Reading from the N-terminus, the 116-residue chain is Large ribosomal subunit protein bL19 (116 aa).

It belongs to the bacterial ribosomal protein bL19 family.

In terms of biological role, this protein is located at the 30S-50S ribosomal subunit interface and may play a role in the structure and function of the aminoacyl-tRNA binding site. The polypeptide is Large ribosomal subunit protein bL19 (Staphylococcus haemolyticus (strain JCSC1435)).